Reading from the N-terminus, the 243-residue chain is GTP cyclohydrolase 1 type 2 (243 aa).

A divalent metal cation contacts are provided by His-63, His-64, Asp-102, His-209, and Glu-213.

Belongs to the GTP cyclohydrolase I type 2/NIF3 family. As to quaternary structure, homohexamer.

It catalyses the reaction GTP + H2O = 7,8-dihydroneopterin 3'-triphosphate + formate + H(+). Its pathway is cofactor biosynthesis; 7,8-dihydroneopterin triphosphate biosynthesis; 7,8-dihydroneopterin triphosphate from GTP: step 1/1. Functionally, converts GTP to dihydroneopterin triphosphate. In Helicobacter pylori (strain J99 / ATCC 700824) (Campylobacter pylori J99), this protein is GTP cyclohydrolase 1 type 2.